A 463-amino-acid polypeptide reads, in one-letter code: V-type proton ATPase subunit S1 (463 aa).

The N-terminal stretch at 1–32 (MMAATVVSRIRTGTGRAPVMWLSLSLVAVAAA) is a signal peptide. Positions 33 to 225 (VATEQQVPLV…TAVRPSRVAR (193 aa)) are excised as a propeptide. At 33-412 (VATEQQVPLV…EQFSYASDCA (380 aa)) the chain is on the lumenal side. Residues asparagine 164, asparagine 255, asparagine 267, asparagine 290, asparagine 297, asparagine 344, asparagine 351, and asparagine 399 are each glycosylated (N-linked (GlcNAc...) asparagine). Residues cysteine 365 and cysteine 411 are joined by a disulfide bond. Residues 413–433 (GFFSPGIWMGLLTTLFMLFIF) form a helical membrane-spanning segment. Residues 434 to 463 (TYGLHMILSLKTMDRFDDHKGPTITLTQIV) are Cytoplasmic-facing.

The protein belongs to the vacuolar ATPase subunit S1 family. Accessory component of the multisubunit proton-transporting vacuolar (V)-ATPase protein pump. Interacts (via N-terminus) with ATP6AP2 (via N-terminus). Interacts with RNASEK. Interacts with TMEM106B (via C-terminus). In terms of processing, N-glycosylated. In terms of tissue distribution, expressed in brain cortex (at protein level). Highly expressed in islets of Langerhans. Expressed in pancreatic acini, pituitary gland, adrenal gland, lung, brain and bone marrow.

The protein resides in the endoplasmic reticulum membrane. The protein localises to the endoplasmic reticulum-Golgi intermediate compartment membrane. Its subcellular location is the cytoplasmic vesicle. It is found in the secretory vesicle. It localises to the synaptic vesicle membrane. The protein resides in the clathrin-coated vesicle membrane. Accessory subunit of the proton-transporting vacuolar (V)-ATPase protein pump, which is required for luminal acidification of secretory vesicles. Guides the V-type ATPase into specialized subcellular compartments, such as neuroendocrine regulated secretory vesicles or the ruffled border of the osteoclast, thereby regulating its activity. Involved in membrane trafficking and Ca(2+)-dependent membrane fusion. May play a role in the assembly of the V-type ATPase complex. In aerobic conditions, involved in intracellular iron homeostasis, thus triggering the activity of Fe(2+) prolyl hydroxylase (PHD) enzymes, and leading to HIF1A hydroxylation and subsequent proteasomal degradation. In islets of Langerhans cells, may regulate the acidification of dense-core secretory granules. The polypeptide is V-type proton ATPase subunit S1 (Atp6ap1) (Mus musculus (Mouse)).